A 210-amino-acid polypeptide reads, in one-letter code: Syntaxin-binding protein 6 (210 aa).

The residue at position 2 (S2) is an N-acetylserine. One can recognise a v-SNARE coiled-coil homology domain in the interval 151 to 210 (GNSILHSAADSVTSAVQKASQALNERGERLGRAEEKTEDMKNSAQQFAETAHKLAMKHKC).

Part of a ternary complex containing SNAP25 and STX1A that can be dissociated by NAPA and NSF. Interacts with STX4A.

It localises to the cytoplasm. The protein resides in the membrane. Forms non-fusogenic complexes with SNAP25 and STX1A and may thereby modulate the formation of functional SNARE complexes and exocytosis. This chain is Syntaxin-binding protein 6 (Stxbp6), found in Mus musculus (Mouse).